The primary structure comprises 101 residues: Small ubiquitin-related modifier 1 (101 aa).

Residues 20–97 enclose the Ubiquitin-like domain; that stretch reads EYIKLKVIGQ…IEVYQEQTGG (78 aa). A Glycyl lysine isopeptide (Gly-Lys) (interchain with K-? in acceptor proteins) cross-link involves residue glycine 97. Residues 98-101 constitute a propeptide that is removed on maturation; it reads HSTV.

The protein belongs to the ubiquitin family. SUMO subfamily. In terms of assembly, interacts with SAE2, UBE2I, RANBP2, PIAS1 and PIAS2. Covalently attached to a number of proteins. Post-translationally, cleavage of precursor form by a sentrin-specific protease is necessary for function.

The protein resides in the nucleus membrane. Its subcellular location is the nucleus speckle. It is found in the cytoplasm. The protein localises to the nucleus. It localises to the PML body. The protein resides in the cell membrane. Functionally, ubiquitin-like protein that can be covalently attached to proteins as a monomer or a lysine-linked polymer. Covalent attachment via an isopeptide bond to its substrates requires prior activation by the E1 complex SAE1-SAE2 and linkage to the E2 enzyme UBE2I. This post-translational modification on lysine residues of proteins plays a crucial role in a number of cellular processes such as nuclear transport, DNA replication and repair, mitosis and signal transduction. Polymeric SUMO1 chains are also susceptible to polyubiquitination which functions as a signal for proteasomal degradation of modified proteins. In Gallus gallus (Chicken), this protein is Small ubiquitin-related modifier 1 (SUMO1).